The primary structure comprises 188 residues: GTPase KRas (188 aa).

Residues 10-18 (GAGGVGKSA), 29-35 (VDEYDPT), 59-60 (AG), and 116-119 (NKCD) contribute to the GTP site. Positions 32–40 (YDPTIEDSY) match the Effector region motif. The tract at residues 167–188 (KEKMSKEGKKKKKKSKTKCVLM) is disordered. The residue at position 185 (Cys-185) is a Cysteine methyl ester. Cys-185 carries the S-farnesyl cysteine lipid modification. The propeptide at 186–188 (VLM) is removed in mature form.

The protein belongs to the small GTPase superfamily. Ras family.

It localises to the cell membrane. The protein localises to the cytoplasm. The catalysed reaction is GTP + H2O = GDP + phosphate + H(+). Alternates between an inactive form bound to GDP and an active form bound to GTP. Activated by a guanine nucleotide-exchange factor (GEF) and inactivated by a GTPase-activating protein (GAP). Ras proteins bind GDP/GTP and possess intrinsic GTPase activity. Plays an important role in the regulation of cell proliferation. May play a role in promoting oncogenic events by inducing transcriptional silencing of tumor suppressor genes (TSGs). In Cyprinus carpio (Common carp), this protein is GTPase KRas (kras).